Here is a 140-residue protein sequence, read N- to C-terminus: Nucleoside diphosphate kinase (140 aa).

Residues lysine 11, phenylalanine 59, arginine 87, threonine 93, arginine 104, and asparagine 114 each contribute to the ATP site. Histidine 117 serves as the catalytic Pros-phosphohistidine intermediate.

It belongs to the NDK family. As to quaternary structure, homotetramer. Mg(2+) is required as a cofactor.

The protein resides in the cytoplasm. It carries out the reaction a 2'-deoxyribonucleoside 5'-diphosphate + ATP = a 2'-deoxyribonucleoside 5'-triphosphate + ADP. The enzyme catalyses a ribonucleoside 5'-diphosphate + ATP = a ribonucleoside 5'-triphosphate + ADP. In terms of biological role, major role in the synthesis of nucleoside triphosphates other than ATP. The ATP gamma phosphate is transferred to the NDP beta phosphate via a ping-pong mechanism, using a phosphorylated active-site intermediate. The chain is Nucleoside diphosphate kinase from Rhizobium rhizogenes (strain K84 / ATCC BAA-868) (Agrobacterium radiobacter).